Here is a 183-residue protein sequence, read N- to C-terminus: ATP synthase subunit b, chloroplastic (183 aa).

A helical membrane pass occupies residues 28–48; the sequence is DIFEANVINILLLLFGLIYVL.

This sequence belongs to the ATPase B chain family. As to quaternary structure, F-type ATPases have 2 components, F(1) - the catalytic core - and F(0) - the membrane proton channel. F(1) has five subunits: alpha(3), beta(3), gamma(1), delta(1), epsilon(1). F(0) has four main subunits: a(1), b(1), b'(1) and c(10-14). The alpha and beta chains form an alternating ring which encloses part of the gamma chain. F(1) is attached to F(0) by a central stalk formed by the gamma and epsilon chains, while a peripheral stalk is formed by the delta, b and b' chains.

It is found in the plastid. Its subcellular location is the chloroplast thylakoid membrane. F(1)F(0) ATP synthase produces ATP from ADP in the presence of a proton or sodium gradient. F-type ATPases consist of two structural domains, F(1) containing the extramembraneous catalytic core and F(0) containing the membrane proton channel, linked together by a central stalk and a peripheral stalk. During catalysis, ATP synthesis in the catalytic domain of F(1) is coupled via a rotary mechanism of the central stalk subunits to proton translocation. Functionally, component of the F(0) channel, it forms part of the peripheral stalk, linking F(1) to F(0). The sequence is that of ATP synthase subunit b, chloroplastic from Pyropia yezoensis (Susabi-nori).